We begin with the raw amino-acid sequence, 64 residues long: Large ribosomal subunit protein uL29 (64 aa).

Belongs to the universal ribosomal protein uL29 family.

The sequence is that of Large ribosomal subunit protein uL29 from Paraburkholderia phytofirmans (strain DSM 17436 / LMG 22146 / PsJN) (Burkholderia phytofirmans).